The primary structure comprises 4076 residues: E3 ubiquitin-protein ligase TOM1-like (4076 aa).

The span at 225–237 shows a compositional bias: low complexity; it reads SSAAPAVSAGSTA. 17 disordered regions span residues 225 to 256, 288 to 360, 748 to 819, 921 to 970, 1083 to 1103, 1571 to 1646, 1988 to 2041, 2067 to 2110, 2275 to 2295, 2356 to 2551, 2581 to 2634, 2782 to 2817, 2858 to 2955, 3037 to 3066, 3105 to 3132, 3216 to 3241, and 3353 to 3444; these read SSAA…KNVA, YPDT…RDGP, IPAE…ILPS, LEAP…NKPA, SPVQ…SSGT, MALD…ITRE, PADA…KRPI, NVPA…KLAK, EGDK…IGRS, SGTA…ELDY, GDDL…LLAP, IPIP…ESTH, EKAR…QAED, EQHE…ASIL, RQLH…GAGT, KQLK…NNNG, and EEQA…QLTP. Over residues 238–250 the composition is skewed to basic and acidic residues; it reads KAKDKEKEKEKAT. Residues 311 to 320 show a composition bias toward low complexity; it reads TTSSPAAPTP. The span at 322 to 343 shows a compositional bias: polar residues; it reads RRSSTMNVSQSSRTQRVGSSEE. The segment covering 767–778 has biased composition (acidic residues); it reads EGNDADDDSEDD. The span at 940–950 shows a compositional bias: basic and acidic residues; sequence VKGKGKEKATD. The segment covering 959–969 has biased composition (polar residues); the sequence is ASSSSSGNNKP. Polar residues predominate over residues 1606-1620; sequence PGTSRETNVGASTTA. A compositionally biased stretch (low complexity) spans 1621 to 1632; the sequence is PQQLPVLPSQQP. The span at 1633–1642 shows a compositional bias: polar residues; it reads ATESQSNTPR. The segment covering 2021–2041 has biased composition (basic and acidic residues); sequence VTDKDMHDAPKNPAQDLKRPI. Over residues 2086–2096 the composition is skewed to polar residues; that stretch reads NEATPSPSGDE. Residues 2099–2110 are compositionally biased toward basic and acidic residues; the sequence is SESKEKEKKLAK. 2 stretches are compositionally biased toward acidic residues: residues 2378-2387 and 2405-2450; these read DLTDDREETP and EFSD…DLGE. The segment covering 2460 to 2469 has biased composition (low complexity); it reads QPGVVEVLMG. 2 stretches are compositionally biased toward acidic residues: residues 2470–2516 and 2523–2551; these read ENDD…DLED and EEGN…ELDY. A compositionally biased stretch (basic and acidic residues) spans 2587–2597; sequence EPIRDFDGHYI. The segment covering 2598 to 2622 has biased composition (acidic residues); that stretch reads DDDEDGEEDDDEDEGEDDMDDDMYF. Composition is skewed to basic and acidic residues over residues 2788–2803 and 2858–2912; these read HSRE…DTYQ and EKAR…ERAE. Residues 2851–2929 are a coiled coil; it reads AIQAEKEEKA…QAAADQEANA (79 aa). The span at 2913 to 2927 shows a compositional bias: low complexity; sequence AAAQAAAQAAADQEA. Basic and acidic residues predominate over residues 3037–3047; that stretch reads EQHEQRRRERQ. Positions 3108 to 3117 are enriched in polar residues; the sequence is HAQQGGQAAS. Residues 3341–3375 are a coiled coil; that stretch reads PLQAIERRRKEAEEQAKKKKEAEEKAATEREAANA. Residues 3353–3372 show a composition bias toward basic and acidic residues; sequence EEQAKKKKEAEEKAATEREA. A compositionally biased stretch (low complexity) spans 3373–3414; the sequence is ANAPEEQASTSTEQTPAQQEATQQPSESTPAAASGQQPAQQD. Basic and acidic residues predominate over residues 3415 to 3439; the sequence is QENKELEAPKEKADEKDVQSDEKKI. Positions 3740 to 4076 constitute an HECT domain; the sequence is KADELKFGKL…TAGSDYFGFA (337 aa). Cysteine 4043 functions as the Glycyl thioester intermediate in the catalytic mechanism.

The protein belongs to the UPL family. TOM1/PTR1 subfamily.

The protein resides in the nucleus. The enzyme catalyses S-ubiquitinyl-[E2 ubiquitin-conjugating enzyme]-L-cysteine + [acceptor protein]-L-lysine = [E2 ubiquitin-conjugating enzyme]-L-cysteine + N(6)-ubiquitinyl-[acceptor protein]-L-lysine.. The protein operates within protein modification; protein ubiquitination. Its function is as follows. Probable ubiquitin ligase protein, which may be involved in mRNA export. E3 ubiquitin ligase proteins mediate ubiquitination and subsequent proteasomal degradation of target proteins. Participates in mRNA export from the nucleus by regulating the transport of hnRNP proteins. The polypeptide is E3 ubiquitin-protein ligase TOM1-like (Neurospora crassa (strain ATCC 24698 / 74-OR23-1A / CBS 708.71 / DSM 1257 / FGSC 987)).